Reading from the N-terminus, the 40-residue chain is uncharacterized protein (40 aa).

The signal sequence occupies residues Met-1–Ala-17.

This is an uncharacterized protein from Archaeoglobus fulgidus (strain ATCC 49558 / DSM 4304 / JCM 9628 / NBRC 100126 / VC-16).